A 512-amino-acid chain; its full sequence is MVSKLDKYWQHPALYWPLLILFAAATPFTFAPYYHFWLMPLIFGAFVRLIELRPRFAVSSAYLFGLTAYTTQFYWIHTALHDVSGLPDLYAVPLTFLLPAYLALYPALCFWLWKKFTLPRGIKIGLVLPILWTLTEFARERFLTGFGWGAIGYSQITPDSPLAGFAPLGGIHMVTLATAFLGVWLVLASNNTARSGKRLLPIILIAALLAAGYTARQTDFTRPDGSRSTVALLQGNIDQTLKWREDQVIPTIQKYYEQVGKTTADIVILPETAIPVMRQNLPENILAKFAEQAQNNGSALAVGISQYTSDGNGYENAVINLTGYQENNQDGIPYYAKNHLVPFGEYKPLPFLTTPLYKMMDMPLSDFRKGGGKQSALLMKNQKIAFNICYEDGFGDELIAAAKDATLLANASNMAWYGKSNAMYQHLQQSQARAMELGRYMVRATNTGATAIISPKGNIIAQAQPDTETVLEGHIKGYVGETPYMKTGSSWWLMGILALAALILFIFRNKEH.

The next 6 helical transmembrane spans lie at 5–25, 56–76, 92–112, 118–138, 168–188, and 195–215; these read LDKYWQHPALYWPLLILFAAA, FAVSSAYLFGLTAYTTQFYWI, VPLTFLLPAYLALYPALCFWL, LPRGIKIGLVLPILWTLTEFA, LGGIHMVTLATAFLGVWLVLA, and SGKRLLPIILIAALLAAGYTA. Residues 233–477 enclose the CN hydrolase domain; sequence LQGNIDQTLK…ETVLEGHIKG (245 aa). Glu-271 functions as the Proton acceptor in the catalytic mechanism. Residue Lys-337 is part of the active site. Residue Cys-389 is the Nucleophile of the active site. A helical membrane pass occupies residues 487–507; the sequence is TGSSWWLMGILALAALILFIF.

The protein belongs to the CN hydrolase family. Apolipoprotein N-acyltransferase subfamily.

Its subcellular location is the cell inner membrane. It catalyses the reaction N-terminal S-1,2-diacyl-sn-glyceryl-L-cysteinyl-[lipoprotein] + a glycerophospholipid = N-acyl-S-1,2-diacyl-sn-glyceryl-L-cysteinyl-[lipoprotein] + a 2-acyl-sn-glycero-3-phospholipid + H(+). Its pathway is protein modification; lipoprotein biosynthesis (N-acyl transfer). Its function is as follows. Catalyzes the phospholipid dependent N-acylation of the N-terminal cysteine of apolipoprotein, the last step in lipoprotein maturation. The sequence is that of Apolipoprotein N-acyltransferase from Neisseria meningitidis serogroup B (strain ATCC BAA-335 / MC58).